Here is a 208-residue protein sequence, read N- to C-terminus: Imidazoleglycerol-phosphate dehydratase (208 aa).

Belongs to the imidazoleglycerol-phosphate dehydratase family.

The protein resides in the cytoplasm. It carries out the reaction D-erythro-1-(imidazol-4-yl)glycerol 3-phosphate = 3-(imidazol-4-yl)-2-oxopropyl phosphate + H2O. It functions in the pathway amino-acid biosynthesis; L-histidine biosynthesis; L-histidine from 5-phospho-alpha-D-ribose 1-diphosphate: step 6/9. This chain is Imidazoleglycerol-phosphate dehydratase, found in Prochlorococcus marinus (strain MIT 9211).